Consider the following 445-residue polypeptide: MTFQNKKILVAGLGGTGISMIAYLRKNGAEVAAYDAELKPERVSQIGKMFDGLVFYTGRLKDALDNGFDILALSPGISERQPDIEAFKQNGGRVLGDIELLADIVNRRDDKVIAITGSNGKTTVTSLVGYLCIKCGLDTVIAGNIGTPVLEAEWQREGKKADVWVLELSSFQLENTESLRPTAATVLNISEDHLDRYDDLLDYAHTKAKIFRGDGVQVLNADDAFCRAMKRAGREVKWFSLEHEADFWLERETGRLKQGNEDLIVTQDIPLQGLHNAANVMAAVALCEAIGLSREALLEHVKTFQGLPHRVEKIGEKNGVVFIDDSKGTNVGATAAAIAGLQNPLFVILGGMGKGQDFTPLRDALVGKAKGVFLIGVDAPQIRRDLDGCGLNMTDCATLGEAVQTAYAQAEAGDIVLLSPACASFDMFKGYAHRSEVFIEAFKAL.

Residue 117–123 (GSNGKTT) coordinates ATP.

This sequence belongs to the MurCDEF family.

Its subcellular location is the cytoplasm. The enzyme catalyses UDP-N-acetyl-alpha-D-muramoyl-L-alanine + D-glutamate + ATP = UDP-N-acetyl-alpha-D-muramoyl-L-alanyl-D-glutamate + ADP + phosphate + H(+). The protein operates within cell wall biogenesis; peptidoglycan biosynthesis. In terms of biological role, cell wall formation. Catalyzes the addition of glutamate to the nucleotide precursor UDP-N-acetylmuramoyl-L-alanine (UMA). The sequence is that of UDP-N-acetylmuramoylalanine--D-glutamate ligase from Neisseria meningitidis serogroup B (strain ATCC BAA-335 / MC58).